The sequence spans 392 residues: Cytochrome b (392 aa).

Transmembrane regions (helical) follow at residues 38 to 58 (FGSL…FLAM), 82 to 104 (WLLR…LHIF), 119 to 139 (VRCL…TGYV), and 185 to 205 (FFSL…LHLA). Positions 88 and 102 each coordinate heme b. Residues histidine 189 and histidine 203 each contribute to the heme b site. Histidine 208 provides a ligand contact to a ubiquinone. The next 4 membrane-spanning stretches (helical) occupy residues 231–251 (FYVK…IWIF), 295–315 (SGGV…PFFK), 327–347 (IHQG…WIGC), and 354–373 (FVTI…AITP).

This sequence belongs to the cytochrome b family. The main subunits of complex b-c1 are: cytochrome b, cytochrome c1 and the Rieske protein. Heme b is required as a cofactor.

The protein localises to the mitochondrion inner membrane. In terms of biological role, component of the ubiquinol-cytochrome c reductase complex (complex III or cytochrome b-c1 complex) that is part of the mitochondrial respiratory chain. The b-c1 complex mediates electron transfer from ubiquinol to cytochrome c. Contributes to the generation of a proton gradient across the mitochondrial membrane that is then used for ATP synthesis. The sequence is that of Cytochrome b (MT-CYB) from Pisum sativum (Garden pea).